Reading from the N-terminus, the 703-residue chain is Peptide transporter CstA (703 aa).

16 helical membrane passes run 6 to 26 (TKIL…YLAL), 29 to 49 (GESV…MIGY), 87 to 107 (VLFG…GPIL), 118 to 138 (LWIL…VLFI), 162 to 182 (VAMV…AMVV), 190 to 210 (PWGL…GIYM), 221 to 241 (ASII…VIAA), 256 to 276 (LAIV…WFLL), 282 to 302 (LSTF…VLVA), 319 to 339 (GPVF…CGAI), 374 to 394 (AVAI…YFAI), 463 to 483 (LMAF…LTAV), 514 to 534 (GLLA…QGAI), 547 to 567 (FGVS…TILV), 574 to 594 (YTWV…YGGI), and 660 to 680 (AILC…CIGI).

It belongs to the peptide transporter carbon starvation (CstA) (TC 2.A.114) family.

The protein localises to the cell inner membrane. Involved in the uptake of dipeptides and tripeptides. May influence host-pathogen interactions. Involved in motility and agglutination, and has a role in stimulation of dendritic cells. This Campylobacter jejuni subsp. jejuni serotype O:2 (strain ATCC 700819 / NCTC 11168) protein is Peptide transporter CstA.